A 407-amino-acid chain; its full sequence is Phosphopentomutase (407 aa).

Residues Asp11, Asp305, His310, Asp346, His347, and His358 each coordinate Mn(2+).

Belongs to the phosphopentomutase family. It depends on Mn(2+) as a cofactor.

The protein resides in the cytoplasm. The enzyme catalyses 2-deoxy-alpha-D-ribose 1-phosphate = 2-deoxy-D-ribose 5-phosphate. The catalysed reaction is alpha-D-ribose 1-phosphate = D-ribose 5-phosphate. The protein operates within carbohydrate degradation; 2-deoxy-D-ribose 1-phosphate degradation; D-glyceraldehyde 3-phosphate and acetaldehyde from 2-deoxy-alpha-D-ribose 1-phosphate: step 1/2. In terms of biological role, isomerase that catalyzes the conversion of deoxy-ribose 1-phosphate (dRib-1-P) and ribose 1-phosphate (Rib-1-P) to deoxy-ribose 5-phosphate (dRib-5-P) and ribose 5-phosphate (Rib-5-P), respectively. The polypeptide is Phosphopentomutase (Legionella pneumophila (strain Corby)).